Consider the following 89-residue polypeptide: Small ribosomal subunit protein bS20 (89 aa).

This sequence belongs to the bacterial ribosomal protein bS20 family.

Functionally, binds directly to 16S ribosomal RNA. This chain is Small ribosomal subunit protein bS20, found in Helicobacter acinonychis (strain Sheeba).